We begin with the raw amino-acid sequence, 640 residues long: Leucine-rich repeat-containing protein 4C (640 aa).

A signal peptide spans 1–44; the sequence is MLNKMTLHPQQIMIGPRFNRALFDPLLVVLLALQLLVVAGLVRA. The region spanning 45–76 is the LRRNT domain; the sequence is QTCPSVCSCSNQFSKVICVRKNLREVPDGIST. LRR repeat units follow at residues 77-98, 101-122, 125-146, 149-170, 173-195, 198-219, 220-241, 244-265, and 268-289; these read NTRLLNLHENQIQIIKVNSFKH, HLEILQLSRNHIRTIEIGAFNG, NLNTLELFDNRLTTIPNGAFVY, KLKELWLRNNPIESIPSYAFNR, SLRRLDLGELKRLSYISEGAFEG, NLRYLNLAMCNLREIPNLTPLI, KLDELDLSGNHLSAIRPGSFQG, HLQKLWMIQSQIQVIERNAFDN, and SLVEINLAHNNLTLLPHDLFTP. The 53-residue stretch at 301–353 folds into the LRRCT domain; the sequence is NPWNCNCDILWLSWWIKDMAPSNTACCARCNTPPNLKGRYIGELDQNYFTCYA. One can recognise an Ig-like C2-type domain in the interval 354–442; sequence PVIVEPPADL…GNTTASATLN (89 aa). Cys-375 and Cys-426 form a disulfide bridge. A disordered region spans residues 463–483; that stretch reads EPSQDEARTTDNNVGPTPVVD. The chain crosses the membrane as a helical span at residues 528–548; the sequence is IIIGCFVAITLMAAVMLVIFY. The residue at position 631 (Ser-631) is a Phosphoserine.

As to quaternary structure, interacts with NTNG1 and WHRN. Highly expressed in the cerebral cortex, including frontal, parietal and occipital lobes. Putamen, amygdala, hippocampus and medulla oblongata show moderate expression. Caudate nucleus and thalamus express small amounts, whereas other brain regions show very weak or no expression.

It localises to the postsynaptic cell membrane. May promote neurite outgrowth of developing thalamic neurons. The sequence is that of Leucine-rich repeat-containing protein 4C (LRRC4C) from Homo sapiens (Human).